The chain runs to 219 residues: UPF0619 GPI-anchored membrane protein AFUA_3G00880 (219 aa).

The first 16 residues, 1–16, serve as a signal peptide directing secretion; that stretch reads MRFALTLTAFVGSVAA. An N-linked (GlcNAc...) asparagine glycan is attached at Asn-85. Disordered stretches follow at residues 107 to 144 and 160 to 205; these read SQQF…GTVS and SSTL…SLTV. Low complexity predominate over residues 114–144; the sequence is SSGSSTTSDSTSSASATGSASTSSSSTGTVS. Residue Asn-198 is the site of GPI-like-anchor amidated asparagine attachment. Residues 199–219 constitute a propeptide, removed in mature form; it reads GAGSLTVPAGSLLLGLVALAL.

It belongs to the UPF0619 family. In terms of processing, the GPI-like anchor contains a phosphoceramide lipid group. The anchor position has not been determined.

It localises to the cell membrane. This Aspergillus fumigatus (strain ATCC MYA-4609 / CBS 101355 / FGSC A1100 / Af293) (Neosartorya fumigata) protein is UPF0619 GPI-anchored membrane protein AFUA_3G00880.